A 382-amino-acid polypeptide reads, in one-letter code: Kelch domain-containing protein 3 (382 aa).

Kelch repeat units lie at residues Arg-25–Arg-77, Thr-88–Lys-138, Thr-139–Gly-189, His-191–Gly-249, and Leu-251–Asp-301.

As to quaternary structure, component of a CRL2(KLHDC3) complex, also named ECS(KLHDC3) complex, composed of CUL2, Elongin BC (ELOB and ELOC), RBX1 and substrate-specific adapter KLHDC3. May form oligomers as a KLHDC3-ELOB-ELOC complex; this interaction is likely autoinhibitory for the E3 ligase complex.

Its subcellular location is the cytoplasm. The protein operates within protein modification; protein ubiquitination. Its function is as follows. Substrate-recognition component of a Cul2-RING (CRL2) E3 ubiquitin-protein ligase complex of the DesCEND (destruction via C-end degrons) pathway, which recognizes a C-degron located at the extreme C terminus of target proteins, leading to their ubiquitination and degradation. The C-degron recognized by the DesCEND pathway is usually a motif of less than ten residues and can be present in full-length proteins, truncated proteins or proteolytically cleaved forms. The CRL2(KLHDC3) complex specifically recognizes proteins with a glycine (Gly) at the C-terminus, leading to their ubiquitination and degradation: recognizes the C-terminal -Arg-(Xaa)n-Arg-Gly, -Arg-(Xaa)n-Lys-Gly, and -Arg-(Xaa)n-Gln-Gly degrons. The CRL2(KLHDC3) complex mediates ubiquitination and degradation of truncated SELENOV and SEPHS2 selenoproteins produced by failed UGA/Sec decoding, which end with a glycine. May be involved in meiotic recombination process. This Bos taurus (Bovine) protein is Kelch domain-containing protein 3.